Reading from the N-terminus, the 127-residue chain is MKEIIYIFIGGGMGSVTRYLTQIAVNERLSPALFPFPWGTFAVNIIGSLLIGFFYSFSERFNLSFELRLFLTVGFCGGFTTFSTLANDSLSLLKGGFYGIFTFYVFISILLGLLAVLAGGYLGEQFK.

4 helical membrane passes run 4–24, 34–54, 65–85, and 97–117; these read IIYIFIGGGMGSVTRYLTQIA, FPFPWGTFAVNIIGSLLIGFF, FELRLFLTVGFCGGFTTFSTL, and FYGIFTFYVFISILLGLLAVL. Na(+) contacts are provided by glycine 77 and threonine 80.

The protein belongs to the fluoride channel Fluc/FEX (TC 1.A.43) family.

The protein resides in the cell inner membrane. The catalysed reaction is fluoride(in) = fluoride(out). With respect to regulation, na(+) is not transported, but it plays an essential structural role and its presence is essential for fluoride channel function. In terms of biological role, fluoride-specific ion channel. Important for reducing fluoride concentration in the cell, thus reducing its toxicity. The polypeptide is Fluoride-specific ion channel FluC (Bacteroides fragilis (strain ATCC 25285 / DSM 2151 / CCUG 4856 / JCM 11019 / LMG 10263 / NCTC 9343 / Onslow / VPI 2553 / EN-2)).